A 395-amino-acid polypeptide reads, in one-letter code: Elongation factor Tu (395 aa).

Residues 10–204 (KPHVNIGTIG…TVDEYIPTPQ (195 aa)) enclose the tr-type G domain. Positions 19–26 (GHVDHGKT) are G1. 19–26 (GHVDHGKT) contributes to the GTP binding site. Thr-26 is a binding site for Mg(2+). The G2 stretch occupies residues 60 to 64 (GITIN). The G3 stretch occupies residues 81 to 84 (DAPG). Residues 81–85 (DAPGH) and 136–139 (NKCD) each bind GTP. Residues 136–139 (NKCD) are G4. The interval 174–176 (SAL) is G5.

This sequence belongs to the TRAFAC class translation factor GTPase superfamily. Classic translation factor GTPase family. EF-Tu/EF-1A subfamily. In terms of assembly, monomer.

The protein localises to the cytoplasm. The catalysed reaction is GTP + H2O = GDP + phosphate + H(+). In terms of biological role, GTP hydrolase that promotes the GTP-dependent binding of aminoacyl-tRNA to the A-site of ribosomes during protein biosynthesis. This Ligilactobacillus salivarius (strain UCC118) (Lactobacillus salivarius) protein is Elongation factor Tu.